Here is a 491-residue protein sequence, read N- to C-terminus: Anthranilate synthase component 1 (491 aa).

L-tryptophan is bound by residues S49 and 271–273; that span reads PYL. 306–307 contacts chorismate; the sequence is GT. E333 is a Mg(2+) binding site. Residues Y421, R441, 455-457, and G457 contribute to the chorismate site; that span reads GAG. E470 serves as a coordination point for Mg(2+).

Belongs to the anthranilate synthase component I family. As to quaternary structure, heterotetramer consisting of two non-identical subunits: a beta subunit (TrpG) and a large alpha subunit (TrpE). The cofactor is Mg(2+).

The catalysed reaction is chorismate + L-glutamine = anthranilate + pyruvate + L-glutamate + H(+). It functions in the pathway amino-acid biosynthesis; L-tryptophan biosynthesis; L-tryptophan from chorismate: step 1/5. With respect to regulation, feedback inhibited by tryptophan. In terms of biological role, part of a heterotetrameric complex that catalyzes the two-step biosynthesis of anthranilate, an intermediate in the biosynthesis of L-tryptophan. In the first step, the glutamine-binding beta subunit (TrpG) of anthranilate synthase (AS) provides the glutamine amidotransferase activity which generates ammonia as a substrate that, along with chorismate, is used in the second step, catalyzed by the large alpha subunit of AS (TrpE) to produce anthranilate. In the absence of TrpG, TrpE can synthesize anthranilate directly from chorismate and high concentrations of ammonia. This Neisseria gonorrhoeae (strain ATCC 700825 / FA 1090) protein is Anthranilate synthase component 1 (trpE).